The following is a 146-amino-acid chain: Hemoglobin subunit beta (146 aa).

Valine 1 carries the post-translational modification N-acetylvaline. Residues 2–146 (HLTPEEKNAV…VANALAHKYH (145 aa)) enclose the Globin domain. A Phosphothreonine modification is found at threonine 12. Residue serine 44 is modified to Phosphoserine. Lysine 59 is subject to N6-acetyllysine. Histidine 63 contributes to the heme b binding site. Lysine 82 is modified (N6-acetyllysine). Histidine 92 contacts heme b. Cysteine 93 bears the S-nitrosocysteine mark. The residue at position 144 (lysine 144) is an N6-acetyllysine.

This sequence belongs to the globin family. Heterotetramer of two alpha chains and two beta chains. In terms of tissue distribution, red blood cells.

Functionally, involved in oxygen transport from the lung to the various peripheral tissues. The chain is Hemoglobin subunit beta (HBB) from Macaca mulatta (Rhesus macaque).